The following is a 410-amino-acid chain: Trifunctional NAD biosynthesis/regulator protein NadR (410 aa).

In terms of domain architecture, HTH cro/C1-type spans L7–Q62. The H-T-H motif DNA-binding region spans L18 to N37. The tract at residues K63–F229 is nicotinamide mononucleotide adenylyltransferase. NAD(+)-binding positions include F70–F73, H77, R104, E144–W157, T177–E179, M204–I206, S259–W261, and Y294–F297. Residues F230–R410 form a ribosylnicotinamide kinase region.

In the central section; belongs to the bacterial NMN adenylyltransferase family. This sequence in the C-terminal section; belongs to the bacterial RNK family. In terms of assembly, homotetramer.

The protein localises to the cell membrane. The protein resides in the cytoplasm. It catalyses the reaction beta-nicotinamide D-ribonucleotide + ATP + H(+) = diphosphate + NAD(+). The enzyme catalyses beta-nicotinamide D-riboside + ATP = beta-nicotinamide D-ribonucleotide + ADP + H(+). It participates in cofactor biosynthesis; NAD(+) biosynthesis [regulation]. It functions in the pathway cofactor biosynthesis; NAD(+) biosynthesis; NAD(+) from nicotinamide D-ribonucleotide: step 1/1. Its activity is regulated as follows. Feed-back regulated by NAD. A high level of NAD causes NadR to lose enzymatic activity and repress several NAD synthetic genes; conversely, a low NAD level activates the assimilatory enzymatic activities and leads to derepression of biosynthetic genes. Functionally, this enzyme has three activities: DNA binding, nicotinamide mononucleotide (NMN) adenylyltransferase and ribosylnicotinamide (RN) kinase. The DNA-binding domain binds to the nadB operator sequence in an NAD- and ATP-dependent manner. As NAD levels increase within the cell, the affinity of NadR for the nadB operator regions of nadA, nadB, and pncB increases, repressing the transcription of these genes. The RN kinase activity catalyzes the phosphorylation of RN to form nicotinamide ribonucleotide. The NMN adenylyltransferase activity catalyzes the transfer of the AMP moiety of ATP to nicotinamide ribonucleotide to form NAD(+). The NMN adenylyltransferase domain also functions as the NAD and ATP sensor. This Escherichia coli (strain K12) protein is Trifunctional NAD biosynthesis/regulator protein NadR (nadR).